The sequence spans 239 residues: tRNA (guanine-N(7)-)-methyltransferase (239 aa).

Residues Glu-69, Glu-94, Asp-121, and Asp-144 each contribute to the S-adenosyl-L-methionine site. Asp-144 is an active-site residue. Lys-148 contacts substrate. The interaction with RNA stretch occupies residues 150-155; the sequence is RHNKRR. Residues Asp-180 and 217 to 220 contribute to the substrate site; that span reads TKFE.

Belongs to the class I-like SAM-binding methyltransferase superfamily. TrmB family. Monomer.

It catalyses the reaction guanosine(46) in tRNA + S-adenosyl-L-methionine = N(7)-methylguanosine(46) in tRNA + S-adenosyl-L-homocysteine. It functions in the pathway tRNA modification; N(7)-methylguanine-tRNA biosynthesis. In terms of biological role, catalyzes the formation of N(7)-methylguanine at position 46 (m7G46) in tRNA. In Salmonella choleraesuis (strain SC-B67), this protein is tRNA (guanine-N(7)-)-methyltransferase.